We begin with the raw amino-acid sequence, 206 residues long: MARYIGPTCKLARREGTDLFLKSGVRPLDSKCKLDQPPGPKLQRRTRMSDYGLQLREKQKVRRMYGVLERQFRNYYKEAARQKGATGTVLLQLLESRLDNVVYRMGFATTRAEARQLVSHRGVQVNGRVVNVPSMQVSPGDLVGLKEKAQKQLRVQAALEMAQQNGWPAWVEVDPKKFEGTYKARPDRADLSAEINESLIVELYSK.

The S4 RNA-binding domain occupies 96–157 (SRLDNVVYRM…KAQKQLRVQA (62 aa)).

Belongs to the universal ribosomal protein uS4 family. Part of the 30S ribosomal subunit. Contacts protein S5. The interaction surface between S4 and S5 is involved in control of translational fidelity.

One of the primary rRNA binding proteins, it binds directly to 16S rRNA where it nucleates assembly of the body of the 30S subunit. Functionally, with S5 and S12 plays an important role in translational accuracy. The protein is Small ribosomal subunit protein uS4 of Alkalilimnicola ehrlichii (strain ATCC BAA-1101 / DSM 17681 / MLHE-1).